Consider the following 343-residue polypeptide: WAT1-related protein At1g43650 (343 aa).

The next 10 helical transmembrane spans lie at 9 to 29 (MAMVFVQIVYAGMPLLSKVAI), 36 to 56 (FVFVFYRQAFAALALSPFAFF), 65 to 85 (LSFILLLKIFFISLCGLTLSL), 98 to 118 (TFAAATTNAIPSITFVLALLF), 130 to 150 (GVAKVTGSMVGMLGALVFAFV), 175 to 195 (SVKGSITMLAANTCWCLWIIM), 209 to 229 (LVALQCLFSCIQSAVWAVAVN), 239 to 259 (FGLPLLSMAYCGIMVTGLTYW), 272 to 292 (FTALYTPLALILTCIVSSFLF), and 296 to 316 (FYLGSVGGAVLLVCGLYLGLW). EamA domains follow at residues 16-139 (IVYA…GSMV) and 188-313 (CWCL…GLYL).

It belongs to the drug/metabolite transporter (DMT) superfamily. Plant drug/metabolite exporter (P-DME) (TC 2.A.7.4) family.

It localises to the membrane. This Arabidopsis thaliana (Mouse-ear cress) protein is WAT1-related protein At1g43650.